A 270-amino-acid polypeptide reads, in one-letter code: UPF0354 protein Bcer98_3354 (270 aa).

The protein belongs to the UPF0354 family.

The sequence is that of UPF0354 protein Bcer98_3354 from Bacillus cytotoxicus (strain DSM 22905 / CIP 110041 / 391-98 / NVH 391-98).